A 178-amino-acid polypeptide reads, in one-letter code: Large ribosomal subunit protein uL6 (178 aa).

The protein belongs to the universal ribosomal protein uL6 family. As to quaternary structure, part of the 50S ribosomal subunit.

This protein binds to the 23S rRNA, and is important in its secondary structure. It is located near the subunit interface in the base of the L7/L12 stalk, and near the tRNA binding site of the peptidyltransferase center. In Streptococcus mutans serotype c (strain ATCC 700610 / UA159), this protein is Large ribosomal subunit protein uL6.